Reading from the N-terminus, the 875-residue chain is Alanine--tRNA ligase (875 aa).

Zn(2+) contacts are provided by His-565, His-569, Cys-666, and His-670.

Belongs to the class-II aminoacyl-tRNA synthetase family. Zn(2+) serves as cofactor.

It is found in the cytoplasm. It carries out the reaction tRNA(Ala) + L-alanine + ATP = L-alanyl-tRNA(Ala) + AMP + diphosphate. In terms of biological role, catalyzes the attachment of alanine to tRNA(Ala) in a two-step reaction: alanine is first activated by ATP to form Ala-AMP and then transferred to the acceptor end of tRNA(Ala). Also edits incorrectly charged Ser-tRNA(Ala) and Gly-tRNA(Ala) via its editing domain. In Methylibium petroleiphilum (strain ATCC BAA-1232 / LMG 22953 / PM1), this protein is Alanine--tRNA ligase.